The sequence spans 486 residues: UDP-N-acetylmuramate--L-alanine ligase (486 aa).

123-129 (GTHGKTT) contributes to the ATP binding site.

This sequence belongs to the MurCDEF family.

The protein resides in the cytoplasm. It catalyses the reaction UDP-N-acetyl-alpha-D-muramate + L-alanine + ATP = UDP-N-acetyl-alpha-D-muramoyl-L-alanine + ADP + phosphate + H(+). Its pathway is cell wall biogenesis; peptidoglycan biosynthesis. Its function is as follows. Cell wall formation. This is UDP-N-acetylmuramate--L-alanine ligase from Pseudomonas fluorescens (strain Pf0-1).